The chain runs to 237 residues: MALVKICGLQSLEAAETAVNNGASLVGVIMVPGRERTVKQEVAREISQMVREKRISKGSKYLDSRQLRKEWDDCPLEDWFEYNVKEINSSGPFLVGVFRNQSIDEIQQAIHTHGLDFVQLHGSEDFDSYIRNIPVPVITRYTDNAVDGLTGEDLAINRALVLLDSEQGGEGKTIDWARAQKFGERRGKYLLAGGVTPDNVAHARSHTGCIGVDVSGGVETNASKDMDKITQFIRNAT.

This sequence belongs to the TrpF family.

The enzyme catalyses N-(5-phospho-beta-D-ribosyl)anthranilate = 1-(2-carboxyphenylamino)-1-deoxy-D-ribulose 5-phosphate. It functions in the pathway amino-acid biosynthesis; L-tryptophan biosynthesis; L-tryptophan from chorismate: step 3/5. The chain is N-(5'-phosphoribosyl)anthranilate isomerase (TRP1) from Komagataella pastoris (Yeast).